The chain runs to 354 residues: tRNA dimethylallyltransferase (354 aa).

28–35 (GPTATGKS) is a binding site for ATP. 30 to 35 (TATGKS) lines the substrate pocket. Residues 53 to 56 (DSRQ) are interaction with substrate tRNA.

It belongs to the IPP transferase family. In terms of assembly, monomer. The cofactor is Mg(2+).

It catalyses the reaction adenosine(37) in tRNA + dimethylallyl diphosphate = N(6)-dimethylallyladenosine(37) in tRNA + diphosphate. In terms of biological role, catalyzes the transfer of a dimethylallyl group onto the adenine at position 37 in tRNAs that read codons beginning with uridine, leading to the formation of N6-(dimethylallyl)adenosine (i(6)A). In Synechococcus sp. (strain JA-2-3B'a(2-13)) (Cyanobacteria bacterium Yellowstone B-Prime), this protein is tRNA dimethylallyltransferase.